Consider the following 362-residue polypeptide: N5-carboxyaminoimidazole ribonucleotide synthase (362 aa).

ATP is bound by residues Arg-85, Lys-125, 130 to 136 (GYDGRGQ), 158 to 161 (EKFI), Glu-166, and 244 to 245 (NE). One can recognise an ATP-grasp domain in the interval 89–274 (KSLLDELNLS…QFELHLRALL (186 aa)).

It belongs to the PurK/PurT family. In terms of assembly, homodimer.

It catalyses the reaction 5-amino-1-(5-phospho-beta-D-ribosyl)imidazole + hydrogencarbonate + ATP = 5-carboxyamino-1-(5-phospho-D-ribosyl)imidazole + ADP + phosphate + 2 H(+). The protein operates within purine metabolism; IMP biosynthesis via de novo pathway; 5-amino-1-(5-phospho-D-ribosyl)imidazole-4-carboxylate from 5-amino-1-(5-phospho-D-ribosyl)imidazole (N5-CAIR route): step 1/2. Its function is as follows. Catalyzes the ATP-dependent conversion of 5-aminoimidazole ribonucleotide (AIR) and HCO(3)(-) to N5-carboxyaminoimidazole ribonucleotide (N5-CAIR). The chain is N5-carboxyaminoimidazole ribonucleotide synthase from Haemophilus influenzae (strain ATCC 51907 / DSM 11121 / KW20 / Rd).